We begin with the raw amino-acid sequence, 628 residues long: Nucleoside-triphosphatase 1 (628 aa).

Positions 1 to 25 (MWLPVYVPLLLVFGVSLSLPQGSLG) are cleaved as a signal peptide. E236 serves as the catalytic Proton acceptor. N432 carries N-linked (GlcNAc...) asparagine glycosylation.

The protein belongs to the GDA1/CD39 NTPase family. Homotetramer.

The protein localises to the secreted. Its subcellular location is the parasitophorous vacuole. The enzyme catalyses a ribonucleoside 5'-triphosphate + H2O = a ribonucleoside 5'-diphosphate + phosphate + H(+). In terms of biological role, may perform an important processing step in the conversion of high energy nucleotides prior to uptake by the parasite and may contribute to intracellular survival and virulence. NTPAse-I has a specific activity 4.5-fold higher than NTPAse-II in hydrolysis of ATP. The primary difference between these isozymes lies in their ability to hydrolyze nucleoside triphosphate versus diphosphate substrates. While NTPAse-II hydrolyzes ATP to ADP and ADP to AMP at almost the same rate, NTPAse-I hydrolyzes ADP to AMP at a much slower rate (0.7% of the rate for ATP). The protein is Nucleoside-triphosphatase 1 (NTP3) of Toxoplasma gondii.